The chain runs to 344 residues: tRNA N6-adenosine threonylcarbamoyltransferase (344 aa).

Residues His-118 and His-122 each coordinate Fe cation. Substrate contacts are provided by residues 141–145, Asp-174, Gly-187, and Asn-284; that span reads TASGG. Asp-312 provides a ligand contact to Fe cation.

It belongs to the KAE1 / TsaD family. Fe(2+) serves as cofactor.

The protein localises to the cytoplasm. The enzyme catalyses L-threonylcarbamoyladenylate + adenosine(37) in tRNA = N(6)-L-threonylcarbamoyladenosine(37) in tRNA + AMP + H(+). Required for the formation of a threonylcarbamoyl group on adenosine at position 37 (t(6)A37) in tRNAs that read codons beginning with adenine. Is involved in the transfer of the threonylcarbamoyl moiety of threonylcarbamoyl-AMP (TC-AMP) to the N6 group of A37, together with TsaE and TsaB. TsaD likely plays a direct catalytic role in this reaction. This chain is tRNA N6-adenosine threonylcarbamoyltransferase, found in Desulfotalea psychrophila (strain LSv54 / DSM 12343).